The chain runs to 499 residues: Trichoplein keratin filament-binding protein (499 aa).

Coiled coils occupy residues 17-143, 169-304, and 405-485; these read LEQQ…LYEQ, EQIT…LSAL, and NRER…TQRG. Residues 260 to 426 form a trichohyalin/plectin homology domain region; the sequence is RKMEQCRKKT…RQFTSREKKQ (167 aa).

This sequence belongs to the TCHP family.

The protein localises to the cytoplasm. It is found in the cytoskeleton. The protein resides in the microtubule organizing center. Its subcellular location is the centrosome. May act as a 'capping' or 'branching' protein for keratin filaments in the cell periphery. May regulate K8/K18 filament and desmosome organization mainly at the apical or peripheral regions of simple epithelial cells. This Xenopus laevis (African clawed frog) protein is Trichoplein keratin filament-binding protein.